Reading from the N-terminus, the 424-residue chain is Dehydrogenase FUM7 (424 aa).

This sequence belongs to the iron-containing alcohol dehydrogenase family. It depends on Fe cation as a cofactor.

It participates in mycotoxin biosynthesis. Its function is as follows. Dehydrogenase; part of the gene cluster that mediates the biosynthesis of fumonisins B1 (FB1), B2 (FB2), B3 (FB3), and B4 (FB4), which are carcinogenic mycotoxins. Within the pathway, FUM7 is involved the addition of the tricarballylic moieties to the carbon backbone. FUM7 dehydrogenase removes the C-3 hydroxyl of citrate to form tricarballylic acid either before or after the CoA activation by the FUM10 acyl-CoA synthetase and FUM14 catalyzed esterification of CoA-activated tricarballylic acid to the C-14 and C-15 hydroxyls of the fumonisin backbone. The biosynthesis starts with the FUM1-catalyzed carbon chain assembly from one molecule of acetyl-CoA, eight molecules of malonyl-CoA, and two molecules of methionine (in S-adenosyl form). The C18 polyketide chain is released from the enzyme by a nucleophilic attack of a carbanion, which is derived from R-carbon of alanine by decarboxylation, on the carbonyl carbon of polyketide acyl chain. This step is catalyzed by the pyridoxal 5'-phosphate-dependent aminoacyl transferase FUM8. The resultant 3-keto intermediate is then stereospecifically reduced to a 3-hydroxyl product by reductase FUM13. Subsequent oxidations at C-10 by the cytochrome P450 monooxygenase FUM2, C-14 and C-15 by FUM6, FUM12 or FUM15, tricarballylic esterification of the hydroxyl groups on C-14 and C-15 by acyltransferase FUM14, and C-5 hydroxylation by 2-keto-glutarate-dependent dioxygenase FUM3 furnish the biosynthesis of fumonisins. The tricarballylic moieties are most likely derived from the citric acid cycle, and their addition to the carbon backbone may involve FUM7, FUM10, FUM11 and FUM14. The chain is Dehydrogenase FUM7 from Gibberella moniliformis (strain M3125 / FGSC 7600) (Maize ear and stalk rot fungus).